Here is a 395-residue protein sequence, read N- to C-terminus: S-adenosylmethionine synthase (395 aa).

Histidine 12 is an ATP binding site. Aspartate 14 is a Mg(2+) binding site. Glutamate 40 provides a ligand contact to K(+). Residues glutamate 53 and glutamine 96 each coordinate L-methionine. Positions glutamine 96–phenylalanine 106 are flexible loop. ATP-binding positions include aspartate 174–lysine 176, arginine 242–phenylalanine 243, aspartate 251, arginine 257–lysine 258, alanine 274, and lysine 278. Aspartate 251 is a binding site for L-methionine. Residue lysine 282 coordinates L-methionine.

The protein belongs to the AdoMet synthase family. As to quaternary structure, homotetramer; dimer of dimers. Mg(2+) serves as cofactor. Requires K(+) as cofactor.

Its subcellular location is the cytoplasm. The enzyme catalyses L-methionine + ATP + H2O = S-adenosyl-L-methionine + phosphate + diphosphate. It participates in amino-acid biosynthesis; S-adenosyl-L-methionine biosynthesis; S-adenosyl-L-methionine from L-methionine: step 1/1. In terms of biological role, catalyzes the formation of S-adenosylmethionine (AdoMet) from methionine and ATP. The overall synthetic reaction is composed of two sequential steps, AdoMet formation and the subsequent tripolyphosphate hydrolysis which occurs prior to release of AdoMet from the enzyme. This Tropheryma whipplei (strain Twist) (Whipple's bacillus) protein is S-adenosylmethionine synthase.